Here is a 141-residue protein sequence, read N- to C-terminus: Large ribosomal subunit protein uL11 (141 aa).

This sequence belongs to the universal ribosomal protein uL11 family. In terms of assembly, part of the ribosomal stalk of the 50S ribosomal subunit. Interacts with L10 and the large rRNA to form the base of the stalk. L10 forms an elongated spine to which L12 dimers bind in a sequential fashion forming a multimeric L10(L12)X complex. One or more lysine residues are methylated.

Its function is as follows. Forms part of the ribosomal stalk which helps the ribosome interact with GTP-bound translation factors. The chain is Large ribosomal subunit protein uL11 from Streptococcus suis (strain 05ZYH33).